Consider the following 685-residue polypeptide: Transforming growth factor beta activator LRRC33 (685 aa).

Residues 1 to 27 form the signal peptide; that stretch reads MPVCGCLSVVLSHAVVLLMLVLHSASG. The Extracellular portion of the chain corresponds to 28 to 640; that stretch reads HPQTFPCRLI…CGFTNNNKES (613 aa). The 28-residue stretch at 29–56 folds into the LRRNT domain; that stretch reads PQTFPCRLIQRVALCSGRQLSVIPDCLP. LRR repeat units follow at residues 57–79, 80–102, 103–129, 130–154, 155–178, 180–201, and 202–225; these read HETE…LSRY, PFLR…AFIE, SHLL…AFRS, LTQL…LVAN, LSSL…TFRD, HQLK…AFDH, and MKKL…EMTQ. N-linked (GlcNAc...) asparagine glycosylation is present at asparagine 154. 2 N-linked (GlcNAc...) asparagine glycosylation sites follow: asparagine 230 and asparagine 244. LRR repeat units lie at residues 248 to 271 and 273 to 296; these read TFQL…PTNN and IRTL…TSSN. Asparagine 291, asparagine 296, asparagine 309, asparagine 312, and asparagine 325 each carry an N-linked (GlcNAc...) asparagine glycan. LRR repeat units lie at residues 326–349, 351–373, 374–397, 400–423, 425–447, 457–480, 482–503, 505–526, 527–549, 551–571, and 573–596; these read LSSV…FIKQ, PQLY…SEDL, PVTI…QTSK, LNNL…IFTS, PNLN…NYMG, MASL…AFKG, SLTH…SLKG, ANTL…FSPY, TNLK…LMAL, LKLL…HASL, and AKKL…WFRT. Residues asparagine 402 and asparagine 407 are each glycosylated (N-linked (GlcNAc...) asparagine). Residue asparagine 533 is glycosylated (N-linked (GlcNAc...) asparagine). The LRRCT domain occupies 597–635; the sequence is FGENKGIHVADLSEITCLDLNYRRHKVVLTDAVYCGFTN. The chain crosses the membrane as a helical span at residues 641 to 661; the sequence is VVWYILLFVTVSVSIMGISVI. Residues 662–685 are Cytoplasmic-facing; it reads YMLTFKPRMLPRVIKKKCWRPTSY.

Belongs to the LRRC32/LRRC33 family.

Its subcellular location is the cell membrane. It is found in the endoplasmic reticulum membrane. Functionally, key regulator of transforming growth factor beta-1 (TGFB1) specifically required for microglia function in the nervous system. Required for activation of latent TGF-beta-1 in macrophages and microglia: associates specifically via disulfide bonds with the Latency-associated peptide (LAP), which is the regulatory chain of TGFB1, and regulates integrin-dependent activation of TGF-beta-1. TGF-beta-1 activation mediated by lrrc33/nrros is highly localized: there is little spreading of TGF-beta-1 activated from one microglial cell to neighboring microglia, suggesting the existence of localized and selective activation of TGF-beta-1 by lrrc33/nrros. In Danio rerio (Zebrafish), this protein is Transforming growth factor beta activator LRRC33.